We begin with the raw amino-acid sequence, 177 residues long: MSRVGKKPVTVPSGVTATVEGQTVKMKGPKGQLQFVVHDDVDVKFEDGSVKVAPRFETNRAQALYGTARAQIANLVDGVTKGFEKKLEITGVGYRASLQGKKLQLALGYSHDVIYDIPEGITITVPKPTEINVVGIDSQKVGQVAAEIRDYRPPEPYKGKGVRYSDEFIFRKEGKKK.

The protein belongs to the universal ribosomal protein uL6 family. As to quaternary structure, part of the 50S ribosomal subunit.

Its function is as follows. This protein binds to the 23S rRNA, and is important in its secondary structure. It is located near the subunit interface in the base of the L7/L12 stalk, and near the tRNA binding site of the peptidyltransferase center. The chain is Large ribosomal subunit protein uL6 from Rhodopseudomonas palustris (strain BisB5).